Reading from the N-terminus, the 221-residue chain is Chalcone--flavanone isomerase (221 aa).

Residues T47, N112, and S189 each coordinate substrate.

Belongs to the chalcone isomerase family.

The catalysed reaction is a chalcone = a flavanone.. Its pathway is secondary metabolite biosynthesis; flavonoid biosynthesis. Its function is as follows. Catalyzes the intramolecular cyclization of bicyclic chalcones into tricyclic (S)-flavanones. Responsible for the isomerization of 4,2',4',6'-tetrahydroxychalcone (also termed chalcone) into naringenin. This Dianthus caryophyllus (Carnation) protein is Chalcone--flavanone isomerase (CHI).